Consider the following 598-residue polypeptide: MAAKQGSFRHGILEKRERLLSNNGFSDFRFTDIESNDLLENENCGRRTRLCCCCSCGNLSEKISGVYDDAKDVARKAWEMGVSDPRKIVFSAKIGLALTIVALLIFYQEPNPDLSRYSVWAILTVVVVFEFTIGATLSKGFNRALGTLSAGGLALGMAELSTLFGDWEEIFCTLSIFCIGFLATFMKLYPSMKAYEYGFRVFLLTYCYILISGFRTGQFIEVAISRFLLIALGAGVSLGVNMFIYPIWAGEDLHNLVVKNFMNVATSLEGCVNGYLRCLEYERIPSKILTYQASEDPVYKGYRSAVESTSQEESLMSFAIWEPPHGPYKSFNYPWKNYVKLSGALKHCAFTVMALHGCILSEIQAPEERRQVFRQELQRVGVEGAKLLRELGEKVKKMEKLGPVDLLFEVHLAAEELQHKIDKKSYLLVNSECWEIGNRATKESEPQELLSLEDSDPPENHAPPIYAFKSLSEAVLEIPPSWGEKNHREALNHRPTFSKQVSWPARLVLPPHLETTNGASPLVETTKTYESASALSLATFASLLIEFVARLQNVVDAFKELSQKANFKEPEIVTTGTDVEFSGERVGLGQKIRRCFGM.

The next 6 membrane-spanning stretches (helical) occupy residues 88–108 (IVFS…IFYQ), 117–137 (YSVW…GATL), 144–164 (ALGT…STLF), 170–190 (IFCT…KLYP), 194–214 (AYEY…ISGF), and 227–247 (FLLI…IYPI).

It belongs to the aromatic acid exporter (TC 2.A.85) family. Expressed in hypocotyls, leaves, roots, flowers, sepals and stamina. In leaves, expressed almost exclusively in mesophyll cells.

The protein localises to the vacuole membrane. With respect to regulation, slow activation by external aluminum. Functionally, vacuolar malate channel. Has a higher selectivity for malate than for fumarate. Also exhibits a weak chloride conductance. This Arabidopsis thaliana (Mouse-ear cress) protein is Aluminum-activated malate transporter 9 (ALMT9).